A 902-amino-acid polypeptide reads, in one-letter code: Chitin synthase 3 (902 aa).

Over residues 1-15 (MAYNRLDDDYFDNRR) the composition is skewed to basic and acidic residues. The interval 1–68 (MAYNRLDDDY…MGPGRHTPSD (68 aa)) is disordered. Residues 19–30 (NRPPPHRTPSPG) show a composition bias toward pro residues. An N-linked (GlcNAc...) asparagine glycan is attached at asparagine 80. The segment at 104-161 (HHDAYYNPTYTPTPNEAQTPYGEPGYEHDGRPLLPQQDSYGQYSDNPQQQQQQQGGLK) is disordered. 2 stretches are compositionally biased toward polar residues: residues 111–121 (PTYTPTPNEAQ) and 139–150 (QQDSYGQYSDNP). Transmembrane regions (helical) follow at residues 449-469 (SAFG…YIAL), 547-567 (RWLN…YQFF), 577-597 (IAFF…WFAI), 623-643 (ILGV…FVLA), 656-676 (LAMI…AVFI), 699-719 (VVVT…VASL), 731-751 (LVQY…YAFC), 830-850 (VVVL…LSTA), and 874-894 (VVLY…MWFL).

It belongs to the chitin synthase family. Class II subfamily.

It localises to the cell membrane. The enzyme catalyses [(1-&gt;4)-N-acetyl-beta-D-glucosaminyl](n) + UDP-N-acetyl-alpha-D-glucosamine = [(1-&gt;4)-N-acetyl-beta-D-glucosaminyl](n+1) + UDP + H(+). In terms of biological role, polymerizes chitin, a structural polymer of the cell wall and septum, by transferring the sugar moiety of UDP-GlcNAc to the non-reducing end of the growing chitin polymer. CHS1 and CHS3 have compensatory functions in cell wall modifications in responses to stresses. Might function as a negative regulator on expression of other CHS genes. The protein is Chitin synthase 3 of Pyricularia oryzae (strain 70-15 / ATCC MYA-4617 / FGSC 8958) (Rice blast fungus).